Here is a 261-residue protein sequence, read N- to C-terminus: Triosephosphate isomerase (261 aa).

Substrate is bound at residue 10–12 (NWK). The active-site Electrophile is the His-100. The active-site Proton acceptor is Glu-172. Residues Gly-178, Ser-218, and 239–240 (GG) contribute to the substrate site.

It belongs to the triosephosphate isomerase family. Homodimer.

The protein localises to the cytoplasm. The enzyme catalyses D-glyceraldehyde 3-phosphate = dihydroxyacetone phosphate. It functions in the pathway carbohydrate biosynthesis; gluconeogenesis. Its pathway is carbohydrate degradation; glycolysis; D-glyceraldehyde 3-phosphate from glycerone phosphate: step 1/1. Functionally, involved in the gluconeogenesis. Catalyzes stereospecifically the conversion of dihydroxyacetone phosphate (DHAP) to D-glyceraldehyde-3-phosphate (G3P). This Rhodococcus jostii (strain RHA1) protein is Triosephosphate isomerase.